The sequence spans 199 residues: DNA repair RAD52-like protein 2, chloroplastic (199 aa).

The transit peptide at 1–40 (MALQVQQTSAAFTISSPSTAAARIKLSPFRTVAVNRGVRC) directs the protein to the chloroplast. Serine 41 is modified (N-acetylserine).

The protein belongs to the RAD52 family. As to expression, expressed in roots and shoots. Expressed at low levels in cauline leaves, flower buds, flowers and siliques.

It is found in the plastid. The protein localises to the chloroplast. Its function is as follows. Involved in double-stranded DNA break repair. This chain is DNA repair RAD52-like protein 2, chloroplastic, found in Arabidopsis thaliana (Mouse-ear cress).